The following is a 203-amino-acid chain: Dual-action ribosomal maturation protein DarP (203 aa).

2 disordered regions span residues 1–31 (MTRK…SQLK) and 178–203 (NADG…DRDA). Positions 21–31 (GYDRPSKSQLK) are enriched in basic and acidic residues. The segment covering 188 to 203 (SEADDAQDDEDDDRDA) has biased composition (acidic residues).

This sequence belongs to the DarP family.

The protein resides in the cytoplasm. Member of a network of 50S ribosomal subunit biogenesis factors which assembles along the 30S-50S interface, preventing incorrect 23S rRNA structures from forming. Promotes peptidyl transferase center (PTC) maturation. This is Dual-action ribosomal maturation protein DarP from Paraburkholderia xenovorans (strain LB400).